A 1027-amino-acid polypeptide reads, in one-letter code: Kinesin heavy chain isoform 5A (1027 aa).

Alanine 2 carries the post-translational modification N-acetylalanine. One can recognise a Kinesin motor domain in the interval 9–327; the sequence is SIKVLCRFRP…LMFGQRAKTI (319 aa). An ATP-binding site is contributed by 86–93; the sequence is GQTSSGKT. A microtubule-binding region spans residues 174–315; that stretch reads VSSPEEILDV…PSSYNDAETK (142 aa). Residues 271–361 are necessary for interaction with ZFYVE27; the sequence is EGTKSYVPYR…KTKAQKETIA (91 aa). A coiled-coil region spans residues 331–905; the sequence is ASVNLELTAE…EVDRIKEAVR (575 aa). Residues 353 to 1027 are interaction with BICD2; sequence TKAQKETIAK…FPLHQETAAS (675 aa). Threonine 397 carries the post-translational modification Phosphothreonine. The disordered stretch occupies residues 906-936; sequence YKSSGKRGHSAQIAKPVRPGHYPASSPTNPY. The tract at residues 907 to 1027 is globular; it reads KSSGKRGHSA…FPLHQETAAS (121 aa).

This sequence belongs to the TRAFAC class myosin-kinesin ATPase superfamily. Kinesin family. Kinesin subfamily. As to quaternary structure, oligomer composed of two heavy chains and two light chains. Interacts with GRIP1. Interacts with FMR1 (via C-terminus); this interaction is increased in a mGluR-dependent manner. Interacts with BORCS5. Interacts with ZFYVE27. Interacts with VAPA, VAPB, SURF4, RAB11A (GDP-bound form), RAB11B (GDP-bound form) and RTN3 in a ZFYVE27-dependent manner. Interacts with BICD2. Interacts with DTNB. Expressed in brain.

Its subcellular location is the cytoplasm. It is found in the perinuclear region. It localises to the cytoskeleton. The protein resides in the perikaryon. The catalysed reaction is ATP + H2O + a kinesin associated with a microtubule at position (n) = ADP + phosphate a kinesin associated with a microtubule at position (n+1, toward the plus end).. Functionally, microtubule-dependent motor required for slow axonal transport of neurofilament proteins (NFH, NFM and NFL). Can induce formation of neurite-like membrane protrusions in non-neuronal cells in a ZFYVE27-dependent manner. The ZFYVE27-KIF5A complex contributes to the vesicular transport of VAPA, VAPB, SURF4, RAB11A, RAB11B and RTN3 proteins in neurons. Required for anterograde axonal transportation of MAPK8IP3/JIP3 which is essential for MAPK8IP3/JIP3 function in axon elongation. The chain is Kinesin heavy chain isoform 5A from Rattus norvegicus (Rat).